A 368-amino-acid chain; its full sequence is 1-deoxy-D-xylulose 5-phosphate reductoisomerase (368 aa).

Residues threonine 10, glycine 11, serine 12, isoleucine 13, glutamine 38, and asparagine 100 each contribute to the NADPH site. 1-deoxy-D-xylulose 5-phosphate is bound at residue lysine 101. NADPH is bound at residue glutamate 102. Aspartate 125 provides a ligand contact to Mn(2+). Residues serine 126, glutamate 127, serine 151, and histidine 172 each coordinate 1-deoxy-D-xylulose 5-phosphate. Glutamate 127 is a binding site for Mn(2+). Glycine 178 lines the NADPH pocket. 1-deoxy-D-xylulose 5-phosphate-binding residues include serine 185, asparagine 190, lysine 191, and glutamate 194. Residue glutamate 194 participates in Mn(2+) binding.

The protein belongs to the DXR family. Mg(2+) serves as cofactor. The cofactor is Mn(2+).

It carries out the reaction 2-C-methyl-D-erythritol 4-phosphate + NADP(+) = 1-deoxy-D-xylulose 5-phosphate + NADPH + H(+). The protein operates within isoprenoid biosynthesis; isopentenyl diphosphate biosynthesis via DXP pathway; isopentenyl diphosphate from 1-deoxy-D-xylulose 5-phosphate: step 1/6. Its function is as follows. Catalyzes the NADPH-dependent rearrangement and reduction of 1-deoxy-D-xylulose-5-phosphate (DXP) to 2-C-methyl-D-erythritol 4-phosphate (MEP). The protein is 1-deoxy-D-xylulose 5-phosphate reductoisomerase of Tropheryma whipplei (strain Twist) (Whipple's bacillus).